Consider the following 436-residue polypeptide: UPF0597 protein YhaM (436 aa).

Belongs to the UPF0597 family.

The polypeptide is UPF0597 protein YhaM (Escherichia coli O139:H28 (strain E24377A / ETEC)).